Reading from the N-terminus, the 142-residue chain is MKTFSAKPADVTHEWFVIDATDKVLGRVASEVALRLRGKHKAIYTPHVDTGDFIVIINAAQLRVTGAKALDKMYYRHSGYPGGITATNFRDMQAKHPGRALEKAVKGMLPKGPLGYAMIKKLKVYGGAEHPHTAQQPKVLDI.

Belongs to the universal ribosomal protein uL13 family. In terms of assembly, part of the 50S ribosomal subunit.

In terms of biological role, this protein is one of the early assembly proteins of the 50S ribosomal subunit, although it is not seen to bind rRNA by itself. It is important during the early stages of 50S assembly. This chain is Large ribosomal subunit protein uL13, found in Polaromonas sp. (strain JS666 / ATCC BAA-500).